Reading from the N-terminus, the 182-residue chain is ADP-ribosylation factor-like protein 3 (182 aa).

A lipid anchor (N-myristoyl glycine) is attached at Gly2. A Phosphoserine modification is found at Ser5. GTP-binding positions include 24-31 (GLDNAGKT), Thr48, 67-71 (DIGGQ), Gly70, 126-129 (NKQD), and 159-161 (SAL). 2 residues coordinate Mg(2+): Thr31 and Thr48.

This sequence belongs to the small GTPase superfamily. Arf family. Found in a complex with ARL3, RP2 and UNC119 (or UNC119B); RP2 induces hydrolysis of GTP ARL3 in the complex, leading to the release of UNC119 (or UNC119B). Interacts with RP2; interaction is direct and stimulated with the activated GTP-bound form of ARL3. Interacts with SYS1. Interacts with ARL2BP; the GTP-bound form interacts with ARL2BP. Microtubule-associated protein. Does not interact with TBCC. Interacts with RP2. Interacts with PDE6D; the interaction occurs specifically with the GTP-bound form of ARL3. Interacts with GGA1; the interaction recruits PKD1:PKD2 complex to trans-Golgi network and is required for ciliary targeting of PKD1:PKD2 complex. Interacts with DNAAF9.

The protein localises to the golgi apparatus membrane. It localises to the cytoplasm. It is found in the cytoskeleton. The protein resides in the spindle. Its subcellular location is the nucleus. The protein localises to the microtubule organizing center. It localises to the centrosome. It is found in the cell projection. The protein resides in the cilium. Functionally, small GTP-binding protein which cycles between an inactive GDP-bound and an active GTP-bound form, and the rate of cycling is regulated by guanine nucleotide exchange factors (GEF) and GTPase-activating proteins (GAP). Required for normal cytokinesis and cilia signaling. Requires assistance from GTPase-activating proteins (GAPs) like RP2 and PDE6D, in order to cycle between inactive GDP-bound and active GTP-bound forms. Required for targeting proteins to the cilium, including myristoylated NPHP3 and prenylated INPP5E. Targets NPHP3 to the ciliary membrane by releasing myristoylated NPHP3 from UNC119B cargo adapter into the cilium. Required for PKD1:PKD2 complex targeting from the trans-Golgi network to the cilium. This chain is ADP-ribosylation factor-like protein 3 (ARL3), found in Bos taurus (Bovine).